The chain runs to 351 residues: Polyribonucleotide 5'-hydroxyl-kinase TK1956 (351 aa).

34 to 41 (GGVDSGKS) is an ATP binding site.

It depends on a divalent metal cation as a cofactor.

The enzyme catalyses a 5'-end dephospho-2'-deoxyribonucleoside-DNA + ATP = a 5'-end 5'-phospho-2'-deoxyribonucleoside-DNA + ADP + H(+). The catalysed reaction is a 5'-end dephospho-ribonucleoside-RNA + ATP = a 5'-end 5'-phospho-ribonucleoside-RNA + ADP + H(+). In terms of biological role, polynucleotide kinase that can phosphorylate the 5'-hydroxyl groups of both single-stranded RNA (ssRNA) and single-stranded DNA (ssDNA). Exhibits a strong preference for ssRNA. The sequence is that of Polyribonucleotide 5'-hydroxyl-kinase TK1956 from Thermococcus kodakarensis (strain ATCC BAA-918 / JCM 12380 / KOD1) (Pyrococcus kodakaraensis (strain KOD1)).